We begin with the raw amino-acid sequence, 95 residues long: MQYTVLIPLFIFIGAMVLFGFSFQKKQPQRRIVQILFLAYCVDFLALIIAVMMLTFLSYDDLMLGVLIPVLILSIIMFFVMIIAHYPLMKRLFGH.

3 consecutive transmembrane segments (helical) span residues 3–23 (YTVL…GFSF), 35–55 (ILFL…MMLT), and 63–83 (MLGV…VMII).

The protein localises to the cell membrane. This is an uncharacterized protein from Mycoplasma pneumoniae (strain ATCC 29342 / M129 / Subtype 1) (Mycoplasmoides pneumoniae).